The primary structure comprises 134 residues: T-cell receptor beta chain V region CTL-F3 (134 aa).

Residues 1-19 form the signal peptide; the sequence is MAPRLLFCLVLCFLRAEPT. Residues 20-115 are v segment; sequence NAGVIQTPRH…SAVYLCASSL (96 aa). An intrachain disulfide couples C42 to C111. A glycan (N-linked (GlcNAc...) asparagine) is linked at N90. Residues 116-119 are d segment; it reads STGV. The tract at residues 120 to 134 is j segment; it reads SYEQYFGPGTRLTVL.

The sequence is that of T-cell receptor beta chain V region CTL-F3 from Mus musculus (Mouse).